Here is a 336-residue protein sequence, read N- to C-terminus: Phosphate acyltransferase (336 aa).

It belongs to the PlsX family. Homodimer. Probably interacts with PlsY.

Its subcellular location is the cytoplasm. It catalyses the reaction a fatty acyl-[ACP] + phosphate = an acyl phosphate + holo-[ACP]. It participates in lipid metabolism; phospholipid metabolism. Its function is as follows. Catalyzes the reversible formation of acyl-phosphate (acyl-PO(4)) from acyl-[acyl-carrier-protein] (acyl-ACP). This enzyme utilizes acyl-ACP as fatty acyl donor, but not acyl-CoA. The protein is Phosphate acyltransferase of Pseudomonas putida (strain ATCC 47054 / DSM 6125 / CFBP 8728 / NCIMB 11950 / KT2440).